The following is a 523-amino-acid chain: GMP synthase [glutamine-hydrolyzing] (523 aa).

A Glutamine amidotransferase type-1 domain is found at 9–198 (PVLVVDYGAQ…LTEIAGLEQN (190 aa)). The Nucleophile role is filled by Cys-86. Catalysis depends on residues His-172 and Glu-174. Residues 199-397 (WTAANIAEEL…LGLPEVIVAR (199 aa)) form the GMPS ATP-PPase domain. 227-233 (SGGVDSA) is a binding site for ATP.

As to quaternary structure, homodimer.

The enzyme catalyses XMP + L-glutamine + ATP + H2O = GMP + L-glutamate + AMP + diphosphate + 2 H(+). Its pathway is purine metabolism; GMP biosynthesis; GMP from XMP (L-Gln route): step 1/1. Catalyzes the synthesis of GMP from XMP. This chain is GMP synthase [glutamine-hydrolyzing], found in Corynebacterium efficiens (strain DSM 44549 / YS-314 / AJ 12310 / JCM 11189 / NBRC 100395).